Reading from the N-terminus, the 238-residue chain is Large ribosomal subunit protein uL1 (238 aa).

It belongs to the universal ribosomal protein uL1 family. As to quaternary structure, part of the 50S ribosomal subunit.

In terms of biological role, binds directly to 23S rRNA. The L1 stalk is quite mobile in the ribosome, and is involved in E site tRNA release. Functionally, protein L1 is also a translational repressor protein, it controls the translation of the L11 operon by binding to its mRNA. This chain is Large ribosomal subunit protein uL1, found in Gloeobacter violaceus (strain ATCC 29082 / PCC 7421).